A 402-amino-acid polypeptide reads, in one-letter code: Tumor necrosis factor receptor superfamily member 11B (402 aa).

Residues 1–21 (MNKLLCCALVFLDISIKWTTQ) form the signal peptide. 4 TNFR-Cys repeats span residues 24 to 62 (FPPK…KTVC), 64 to 105 (PCPD…NRVC), 106 to 142 (ECEE…NTVC), and 144 to 185 (RCPD…DNIC). 8 cysteine pairs are disulfide-bonded: Cys-41–Cys-54, Cys-44–Cys-62, Cys-65–Cys-80, Cys-83–Cys-97, Cys-87–Cys-105, Cys-107–Cys-118, Cys-124–Cys-142, and Cys-145–Cys-160. 2 N-linked (GlcNAc...) asparagine glycosylation sites follow: Asn-165 and Asn-178. Cys-166 and Cys-185 are joined by a disulfide. Death domains are found at residues 198 to 269 (IDMT…DMVK) and 270 to 365 (KIIQ…VIQS).

Homodimer. Interacts with TNFSF10 and TNFSF11. Post-translationally, N-glycosylated. Contains sialic acid residues.

It is found in the secreted. Its function is as follows. Acts as a decoy receptor for TNFSF11/RANKL and thereby neutralizes its function in osteoclastogenesis. Inhibits the activation of osteoclasts and promotes osteoclast apoptosis. Bone homeostasis seems to depend on the local ratio between TNFSF11 and TNFRSF11B. May also play a role in preventing arterial calcification. May act as decoy receptor for TNFSF10/TRAIL and protect against apoptosis. TNFSF10/TRAIL binding blocks the inhibition of osteoclastogenesis. In Bos taurus (Bovine), this protein is Tumor necrosis factor receptor superfamily member 11B (TNFRSF11B).